The sequence spans 119 residues: Large ribosomal subunit protein bL20 (119 aa).

This sequence belongs to the bacterial ribosomal protein bL20 family.

Binds directly to 23S ribosomal RNA and is necessary for the in vitro assembly process of the 50S ribosomal subunit. It is not involved in the protein synthesizing functions of that subunit. The polypeptide is Large ribosomal subunit protein bL20 (Verminephrobacter eiseniae (strain EF01-2)).